An 804-amino-acid chain; its full sequence is DNA gyrase subunit B (804 aa).

The Toprim domain occupies 431–546 (CEMYIVEGDS…NGCVYIAQPP (116 aa)). Residues glutamate 437, aspartate 511, and aspartate 513 each contribute to the Mg(2+) site.

The protein belongs to the type II topoisomerase GyrB family. In terms of assembly, heterotetramer, composed of two GyrA and two GyrB chains. In the heterotetramer, GyrA contains the active site tyrosine that forms a transient covalent intermediate with DNA, while GyrB binds cofactors and catalyzes ATP hydrolysis. Requires Mg(2+) as cofactor. Mn(2+) serves as cofactor. The cofactor is Ca(2+).

Its subcellular location is the cytoplasm. The enzyme catalyses ATP-dependent breakage, passage and rejoining of double-stranded DNA.. Its function is as follows. A type II topoisomerase that negatively supercoils closed circular double-stranded (ds) DNA in an ATP-dependent manner to modulate DNA topology and maintain chromosomes in an underwound state. Negative supercoiling favors strand separation, and DNA replication, transcription, recombination and repair, all of which involve strand separation. Also able to catalyze the interconversion of other topological isomers of dsDNA rings, including catenanes and knotted rings. Type II topoisomerases break and join 2 DNA strands simultaneously in an ATP-dependent manner. This Chlamydia muridarum (strain MoPn / Nigg) protein is DNA gyrase subunit B.